Reading from the N-terminus, the 736-residue chain is DNA topoisomerase 4 subunit A (736 aa).

One can recognise a Topo IIA-type catalytic domain in the interval 32–496 (LPDVRDGLKP…SFEQVTLTNQ (465 aa)). Y120 acts as the O-(5'-phospho-DNA)-tyrosine intermediate in catalysis.

This sequence belongs to the type II topoisomerase GyrA/ParC subunit family. ParC type 1 subfamily. Heterotetramer composed of ParC and ParE.

The protein localises to the cell membrane. The enzyme catalyses ATP-dependent breakage, passage and rejoining of double-stranded DNA.. Topoisomerase IV is essential for chromosome segregation. It relaxes supercoiled DNA. Performs the decatenation events required during the replication of a circular DNA molecule. The chain is DNA topoisomerase 4 subunit A from Rickettsia bellii (strain RML369-C).